Here is a 74-residue protein sequence, read N- to C-terminus: Kappa-stichotoxin-Shd5a (74 aa).

A signal peptide spans 1–22; that stretch reads MKFQVIAAVLLIAFCLCVVVTA. Positions 23 to 39 are excised as a propeptide; it reads RMELQDVEDVENGFQKR. Residues 42–74 enclose the ShKT domain; that stretch reads CIDTIPQSRCTAFQCKHSMKYRLSFCRKTCGTC. Disulfide bonds link cysteine 42–cysteine 74, cysteine 51–cysteine 67, and cysteine 56–cysteine 71.

The protein belongs to the sea anemone type 1 potassium channel toxin family. Type 1a subfamily.

Its subcellular location is the secreted. It localises to the nematocyst. Functionally, inhibits voltage-gated potassium channels (Kv) with higher potency for Kv1.1/KCNA1 and Kv1.3/KCNA3. The chain is Kappa-stichotoxin-Shd5a from Stichodactyla haddoni (Saddle carpet anemone).